Reading from the N-terminus, the 103-residue chain is Large ribosomal subunit protein mL63 (103 aa).

It belongs to the mitochondrion-specific ribosomal protein mL63 family.

The protein resides in the mitochondrion. The protein is Large ribosomal subunit protein mL63 (mrpl57) of Danio rerio (Zebrafish).